We begin with the raw amino-acid sequence, 317 residues long: Retinol dehydrogenase 16 (317 aa).

NAD(+) is bound at residue 33 to 57 (FITGCDSGFGKLLARQLDARGLRVL). Residue S164 coordinates substrate. Y176 (proton acceptor) is an active-site residue. The chain crosses the membrane as a helical span at residues 289 to 309 (LLYLPMSYMPTFLVDAIMYWV).

This sequence belongs to the short-chain dehydrogenases/reductases (SDR) family. In terms of assembly, homodimer. In terms of processing, not N-glycosylated. In terms of tissue distribution, highly expressed in adult liver (at protein level). Detected in endometrium, liver and foreskin. Detected in the spineous layers of adult skin, and at lower levels in basal and granular skin layers. Detected in fetal liver and lung.

It localises to the microsome membrane. It is found in the endoplasmic reticulum membrane. The enzyme catalyses all-trans-retinol--[retinol-binding protein] + NAD(+) = all-trans-retinal--[retinol-binding protein] + NADH + H(+). It carries out the reaction all-trans-retinol + NAD(+) = all-trans-retinal + NADH + H(+). The catalysed reaction is 13-cis-retinol + NAD(+) = 13-cis-retinal + NADH + H(+). It catalyses the reaction 11-cis-retinol + NAD(+) = 11-cis-retinal + NADH + H(+). The enzyme catalyses 9-cis-retinol + NAD(+) = 9-cis-retinal + NADH + H(+). It carries out the reaction 5alpha-androstane-3alpha,17beta-diol + NAD(+) = 17beta-hydroxy-5alpha-androstan-3-one + NADH + H(+). The catalysed reaction is androsterone + NAD(+) = 5alpha-androstan-3,17-dione + NADH + H(+). Its pathway is cofactor metabolism; retinol metabolism. Its activity is regulated as follows. Inhibited by citral, perillyl alcohol, geraniol, farnesol and geranyl geraniol. Oxidoreductase with a preference for NAD. Oxidizes all-trans-retinol, 9-cis-retinol, 11-cis-retinol and 13-cis-retinol to the corresponding aldehydes. Has higher activity towards CRBP-bound retinol than with free retinol. Also oxidizes 3-alpha-hydroxysteroids. Oxidizes androstanediol and androsterone to dihydrotestosterone and androstanedione. Can also catalyze the reverse reaction. The protein is Retinol dehydrogenase 16 of Homo sapiens (Human).